The primary structure comprises 386 residues: MNAALATTTATTPVLRRETPLLHYCSLTTKSPVYQINRVRFGSCVQTVSKKFLKISASSQSASAAVNVTADASIPKEMKAWVYSDYGGVDVLKLESNIVVPEIKEDQVLIKVVAAALNPVDAKRRQGKFKATDSPLPTVPGYDVAGVVVKVGSAVKDLKEGDEVYANVSEKALEGPKQFGSLAEYTAVEEKLLALKPKNIDFAQAAGLPLAIETADEGLVRTEFSAGKSILVLNGAGGVGSLVIQLAKHVYGASKVAATASTEKLELVRSLGADLAIDYTKENIEDLPDKYDVVFDAIGMCDKAVKVIKEGGKVVALTGAVTPPGFRFVVTSNGDVLKKLNPYIESGKVKPVVDPKGPFPFSRVADAFSYLETNHATGKVVVYPIP.

Belongs to the zinc-containing alcohol dehydrogenase family. Quinone oxidoreductase subfamily.

It localises to the plastid. It is found in the chloroplast. Functionally, reduces the double bond in short-chain unsaturated carbonyls. Acts preferentially on alpha,beta-unsaturated ketones rather on alpha,beta-unsaturated aldehydes. Has no activity with (E)-2-hexenal and (E)-2-pentenal. Contributes to detoxify stromal reactive carbonyls produced under oxidative stress. This is NADPH-dependent alkenal/one oxidoreductase, chloroplastic from Arabidopsis thaliana (Mouse-ear cress).